The sequence spans 198 residues: uncharacterized protein (198 aa).

Residues 51–74 (EEPDNGDDRGSRRTTGQGRKWAAH) are disordered.

This is an uncharacterized protein from Homo sapiens (Human).